A 132-amino-acid polypeptide reads, in one-letter code: Small ribosomal subunit protein uS8c (132 aa).

Belongs to the universal ribosomal protein uS8 family. As to quaternary structure, part of the 30S ribosomal subunit.

The protein resides in the plastid. It localises to the chloroplast. In terms of biological role, one of the primary rRNA binding proteins, it binds directly to 16S rRNA central domain where it helps coordinate assembly of the platform of the 30S subunit. This chain is Small ribosomal subunit protein uS8c (rps8), found in Psilotum nudum (Whisk fern).